The following is a 1316-amino-acid chain: DNA-directed RNA polymerase subunit beta' (1316 aa).

4 residues coordinate Zn(2+): Cys60, Cys62, Cys75, and Cys78. Mg(2+) contacts are provided by Asp535, Asp537, and Asp539. 4 residues coordinate Zn(2+): Cys891, Cys968, Cys975, and Cys978.

It belongs to the RNA polymerase beta' chain family. The RNAP catalytic core consists of 2 alpha, 1 beta, 1 beta' and 1 omega subunit. When a sigma factor is associated with the core the holoenzyme is formed, which can initiate transcription. Mg(2+) serves as cofactor. Requires Zn(2+) as cofactor.

It carries out the reaction RNA(n) + a ribonucleoside 5'-triphosphate = RNA(n+1) + diphosphate. DNA-dependent RNA polymerase catalyzes the transcription of DNA into RNA using the four ribonucleoside triphosphates as substrates. The protein is DNA-directed RNA polymerase subunit beta' of Mycobacterium tuberculosis (strain CDC 1551 / Oshkosh).